Reading from the N-terminus, the 383-residue chain is Succinyl-diaminopimelate desuccinylase (383 aa).

H79 serves as a coordination point for Zn(2+). The active site involves D81. Position 110 (D110) interacts with Zn(2+). The active-site Proton acceptor is E141. The Zn(2+) site is built by E142, E170, and H355.

The protein belongs to the peptidase M20A family. DapE subfamily. Homodimer. It depends on Zn(2+) as a cofactor. The cofactor is Co(2+).

It catalyses the reaction N-succinyl-(2S,6S)-2,6-diaminopimelate + H2O = (2S,6S)-2,6-diaminopimelate + succinate. Its pathway is amino-acid biosynthesis; L-lysine biosynthesis via DAP pathway; LL-2,6-diaminopimelate from (S)-tetrahydrodipicolinate (succinylase route): step 3/3. Its function is as follows. Catalyzes the hydrolysis of N-succinyl-L,L-diaminopimelic acid (SDAP), forming succinate and LL-2,6-diaminopimelate (DAP), an intermediate involved in the bacterial biosynthesis of lysine and meso-diaminopimelic acid, an essential component of bacterial cell walls. In Helicobacter pylori (strain P12), this protein is Succinyl-diaminopimelate desuccinylase.